The primary structure comprises 407 residues: Peptidase T (407 aa).

H82 lines the Zn(2+) pocket. Residue D84 is part of the active site. D143 is a Zn(2+) binding site. Residue E177 is the Proton acceptor of the active site. The Zn(2+) site is built by E178, D200, and H382.

It belongs to the peptidase M20B family. Requires Zn(2+) as cofactor.

The protein localises to the cytoplasm. The catalysed reaction is Release of the N-terminal residue from a tripeptide.. Its function is as follows. Cleaves the N-terminal amino acid of tripeptides. The protein is Peptidase T of Streptococcus pyogenes serotype M12 (strain MGAS2096).